An 898-amino-acid polypeptide reads, in one-letter code: Tight junction protein ZO-3 (898 aa).

The PDZ 1 domain occupies 11 to 93; sequence TATLCRDPRR…LANITVKRPR (83 aa). A disordered region spans residues 98 to 165; it reads PATKAGTSGR…SPGGNSEANG (68 aa). Phosphoserine is present on residues S128, S156, S161, S195, and S313. The PDZ 2 domain occupies 187–264; it reads SVLVRRTESE…KLTLLVLRDR (78 aa). Residues 295 to 368 form a disordered region; sequence LSQAVPSHVP…QSAEDRGYSP (74 aa). The segment covering 312 to 349 has biased composition (basic and acidic residues); it reads RSLDSDGTDSPRDSPPLRRENSLDSRTISEPDAPRHSS. T319 carries the post-translational modification Phosphothreonine. Phosphoserine is present on residues S321 and S360. The PDZ 3 domain maps to 369–435; it reads DSRVVRFHKG…LTREEAVQFL (67 aa). Residues 464–538 enclose the SH3 domain; that stretch reads GDSFYIRTHF…PNQSRAEQLA (75 aa). The Guanylate kinase-like domain maps to 569 to 750; that stretch reads LRRGAKKSTQ…WYQELKAVVR (182 aa). S580 is modified (phosphoserine). The segment at 759–898 is disordered; that stretch reads TAEDQLDNSS…GYDWGPATDL (140 aa). A compositionally biased stretch (acidic residues) spans 762-772; the sequence is DQLDNSSEDNL. Residues 780-790 show a composition bias toward low complexity; the sequence is ADSSADLSCDS. The segment covering 796–814 has biased composition (acidic residues); sequence YETDGEGYTDGEGYTDVDE. Basic and acidic residues predominate over residues 831-841; that stretch reads EEPRSPRDHGR. A phosphoserine mark is found at S835, S884, and S885.

It belongs to the MAGUK family. As to quaternary structure, heterodimer with TJP1. Interacts with UBN1. Interacts with occludin OCLN and claudins. Interacts with PATJ. Interacts with FASLG. Interacts with CCND1. Post-translationally, phosphorylated.

Its subcellular location is the cell membrane. The protein localises to the cell junction. It is found in the tight junction. It localises to the nucleus. TJP1, TJP2, and TJP3 are closely related scaffolding proteins that link tight junction (TJ) transmembrane proteins such as claudins, junctional adhesion molecules, and occludin to the actin cytoskeleton. The tight junction acts to limit movement of substances through the paracellular space and as a boundary between the compositionally distinct apical and basolateral plasma membrane domains of epithelial and endothelial cells. Binds and recruits PATJ to tight junctions where it connects and stabilizes apical and lateral components of tight junctions. Promotes cell-cycle progression through the sequestration of cyclin D1 (CCND1) at tight junctions during mitosis which prevents CCND1 degradation during M-phase and enables S-phase transition. With TJP1 and TJP2, participates in the junctional retention and stability of the transcription factor DBPA, but is not involved in its shuttling to the nucleus. Contrary to TJP2, TJP3 is dispensable for individual viability, embryonic development, epithelial differentiation, and the establishment of TJs, at least in the laboratory environment. The protein is Tight junction protein ZO-3 (TJP3) of Canis lupus familiaris (Dog).